Consider the following 90-residue polypeptide: Cell division topological specificity factor (90 aa).

This sequence belongs to the MinE family.

Functionally, prevents the cell division inhibition by proteins MinC and MinD at internal division sites while permitting inhibition at polar sites. This ensures cell division at the proper site by restricting the formation of a division septum at the midpoint of the long axis of the cell. This Pelotomaculum thermopropionicum (strain DSM 13744 / JCM 10971 / SI) protein is Cell division topological specificity factor.